The chain runs to 121 residues: Holin-like protein CidA 1 (121 aa).

4 helical membrane passes run 7-24 (SGQI…EWIA), 28-50 (HLPV…FNLV), 62-81 (LLKE…IRYR), and 91-113 (LILI…TELL).

The protein belongs to the CidA/LrgA family. CidA subfamily.

The protein localises to the cell membrane. Its function is as follows. Increases the activity of extracellular murein hydrolases possibly by mediating their export via hole formation. Inhibited by the antiholin-like proteins LrgAB. In an unstressed cell, the LrgAB products probably inhibit the function of the CidA protein. When a cell is stressed by the addition of antibiotics or by other factors in the environment, CidA possibly oligomerizes within the bacterial cell membrane, creating lesions that disrupt the proton motive force, which in turn results in loss of cell viability. These lesions are also hypothesized to regulate the subsequent cell lysis by either allowing the murein hydrolases access to the cell wall substrate and/or regulating their activity by a possible change in the cell wall pH that results from loss of membrane potential. This Bacillus cereus (strain ATCC 14579 / DSM 31 / CCUG 7414 / JCM 2152 / NBRC 15305 / NCIMB 9373 / NCTC 2599 / NRRL B-3711) protein is Holin-like protein CidA 1 (cidA1).